The sequence spans 640 residues: Protein argonaute (640 aa).

The segment at 1–100 is N-terminal domain; it reads MYLNLYEIKI…YIKKKFIDNN (100 aa). Residues 101-153 are linker L1; it reads FYYKRGNNYISINDKFPLDSNTNVNAHLTYKIKLYKINERYYISVLPKFTFLS. The segment at 154–209 is PAZ domain; sequence DKPALESPIKSTYLFNIKSGKTFPYISGLNGVLKIDLGENGIKEVLFPENYYFNFT. Residues 210–291 are linker L2; sequence SKEAEKFGFS…KYSFYKNDQK (82 aa). Residues 292–423 form a mid domain region; that stretch reads IKIAFFFSSK…YVYKMGNFIP (132 aa). The PIWI domain stretch occupies residues 424–640; it reads ECQPYVIRNL…EWKLYIPYMK (217 aa). Catalysis depends on residues Asp-445, Glu-481, Asp-515, and Asn-623. Asp-445 is a Mn(2+) binding site. Residues Asp-515 and Asn-623 each contribute to the Mn(2+) site.

It belongs to the argonaute family. Long pAgo subfamily. Mn(2+) is required as a cofactor.

In terms of biological role, a highly versatile argonaute that uses 5'-phospho- and 5'-OH- guide RNA (gRNA) or DNA (gDNA) to cleave target RNA or ssDNA (tDNA) in all possible combinations; has no detectable activity in the absence of guide. Uses short guide sequences (18-21 nucleotides (nt) on average) to bind complementary target nucleic acids resulting in target cleavage in a site-specific manner. Using 5'-phospho-gRNA or 5'-OH-gRNA the cleavage site is 10 nt downstream of the target residue base-paired with the 5'-end of the gRNA, using 5'-phospho-gDNA the cleavage site is 11 nucleotides (nt) downstream, while with 5'-OH-gDNA the cleavage site is 9 nt downstream. In Marinitoga hydrogenitolerans (strain DSM 16785 / JCM 12826 / AT1271), this protein is Protein argonaute.